The primary structure comprises 151 residues: MSSNVIEIYADGACKGNPGPGGWGAWLSFAGHEKELWGGELVTTNNRMELTAVIRALEALKRQCSVRIYTDSVYVQKGITEWVHSWKARNWLTSDRKPVKNVDLWKALDSLVQQHQVEWVWVKGHAGNVGNERADALANKGVDQVLGREVV.

The region spanning serine 2–aspartate 143 is the RNase H type-1 domain. Residues aspartate 11, glutamate 49, aspartate 71, and aspartate 135 each contribute to the Mg(2+) site.

This sequence belongs to the RNase H family. As to quaternary structure, monomer. The cofactor is Mg(2+).

It is found in the cytoplasm. It carries out the reaction Endonucleolytic cleavage to 5'-phosphomonoester.. Functionally, endonuclease that specifically degrades the RNA of RNA-DNA hybrids. The sequence is that of Ribonuclease H from Methylobacillus flagellatus (strain ATCC 51484 / DSM 6875 / VKM B-1610 / KT).